The primary structure comprises 98 residues: MNVEPSVRVEDKLYYNRYLVDAGHPHVRVRAHKTPSPQLLTLLKACPARCYELNDNGQVEVTVDGCIECGTCRVIAEPTGDIEWSHPRGGYGVLFKFG.

In terms of domain architecture, 4Fe-4S ferredoxin-type spans 57 to 87; the sequence is GQVEVTVDGCIECGTCRVIAEPTGDIEWSHP.

It to ferredoxins from P.putida and C.tartarivorum, ferredoxin I from A.vinelandii, ferredoxin II from D.desulfuricans.

Functionally, could be a 3Fe-4S cluster-containing protein. This Bradyrhizobium diazoefficiens (strain JCM 10833 / BCRC 13528 / IAM 13628 / NBRC 14792 / USDA 110) protein is Ferredoxin-like protein (fixX).